The primary structure comprises 228 residues: Heat shock 70-related protein 4 (228 aa).

A disordered region spans residues arginine 57–aspartate 80. Residues aspartate 68–aspartate 80 show a composition bias toward basic and acidic residues.

The protein belongs to the heat shock protein 70 family.

The protein is Heat shock 70-related protein 4 (HSP70.4) of Leishmania major.